The primary structure comprises 396 residues: Metallophosphoesterase 1 (396 aa).

A helical membrane pass occupies residues 27 to 47 (IAVVFAVLLFCEFLIYYLAIF). Positions 77, 119, 157, 249, 303, and 305 each coordinate a divalent metal cation. Residues 356–376 (VVLVIYCGAVGFLVVLTLSHL) traverse the membrane as a helical segment. Residues 392 to 396 (KRKTR) carry the Di-lysine motif motif.

It belongs to the metallophosphoesterase superfamily. MPPE1 family. In terms of assembly, interacts with GPI-anchor proteins (via the GPI portion). Interacts with TMED10. Mn(2+) serves as cofactor.

The protein localises to the endoplasmic reticulum-Golgi intermediate compartment membrane. Functionally, metallophosphoesterase that catalyzes the removal of a side-chain ethanolamine-phosphate (EtNP) from the second mannose of the GPI-anchor protein intermediate. Participates in the glycan remodeling steps of GPI-anchor maturation to allow an efficient transport of GPI-anchor proteins from the endoplasmic reticulum to the Golgi. This is Metallophosphoesterase 1 from Macaca fascicularis (Crab-eating macaque).